Consider the following 123-residue polypeptide: Small ribosomal subunit protein uS13 (123 aa).

Positions 96–123 (LPVRGQRTKTNARTRKGPKKTVGARRKK) are disordered.

This sequence belongs to the universal ribosomal protein uS13 family. Part of the 30S ribosomal subunit. Forms a loose heterodimer with protein S19. Forms two bridges to the 50S subunit in the 70S ribosome.

Located at the top of the head of the 30S subunit, it contacts several helices of the 16S rRNA. In the 70S ribosome it contacts the 23S rRNA (bridge B1a) and protein L5 of the 50S subunit (bridge B1b), connecting the 2 subunits; these bridges are implicated in subunit movement. Contacts the tRNAs in the A and P-sites. The chain is Small ribosomal subunit protein uS13 from Desulforamulus reducens (strain ATCC BAA-1160 / DSM 100696 / MI-1) (Desulfotomaculum reducens).